Reading from the N-terminus, the 258-residue chain is Tryptophan synthase alpha chain (258 aa).

Active-site proton acceptor residues include glutamate 47 and aspartate 58.

Belongs to the TrpA family. Tetramer of two alpha and two beta chains.

The enzyme catalyses (1S,2R)-1-C-(indol-3-yl)glycerol 3-phosphate + L-serine = D-glyceraldehyde 3-phosphate + L-tryptophan + H2O. Its pathway is amino-acid biosynthesis; L-tryptophan biosynthesis; L-tryptophan from chorismate: step 5/5. In terms of biological role, the alpha subunit is responsible for the aldol cleavage of indoleglycerol phosphate to indole and glyceraldehyde 3-phosphate. This is Tryptophan synthase alpha chain from Bacillus cereus (strain G9842).